Here is a 172-residue protein sequence, read N- to C-terminus: MERAAKKEAVESLNGLFQTTSVAIVAHYSGLTVAQMQKLRQQMKQAGASVKVSKNRLAKIALEGTDVAAIGPLLKGPTVIATSSDPVAAPKVAVEFAKANEKFVILGGSMGTTVLNVDGVKALASLPSLDELRAKLVGLVQAPATKIAQVTTAPAAKLARVVQAYASKSEAA.

This sequence belongs to the universal ribosomal protein uL10 family. In terms of assembly, part of the ribosomal stalk of the 50S ribosomal subunit. The N-terminus interacts with L11 and the large rRNA to form the base of the stalk. The C-terminus forms an elongated spine to which L12 dimers bind in a sequential fashion forming a multimeric L10(L12)X complex.

Forms part of the ribosomal stalk, playing a central role in the interaction of the ribosome with GTP-bound translation factors. The sequence is that of Large ribosomal subunit protein uL10 from Rhodopseudomonas palustris (strain TIE-1).